The primary structure comprises 31 residues: Cytochrome b6-f complex subunit 6 (31 aa).

The chain crosses the membrane as a helical span at residues 4–24; that stretch reads IFSYIALLLSALVITLTCYIG.

This sequence belongs to the PetL family. The 4 large subunits of the cytochrome b6-f complex are cytochrome b6, subunit IV (17 kDa polypeptide, PetD), cytochrome f and the Rieske protein, while the 4 small subunits are PetG, PetL, PetM and PetN. The complex functions as a dimer.

The protein resides in the plastid. Its subcellular location is the chloroplast thylakoid membrane. In terms of biological role, component of the cytochrome b6-f complex, which mediates electron transfer between photosystem II (PSII) and photosystem I (PSI), cyclic electron flow around PSI, and state transitions. PetL is important for photoautotrophic growth as well as for electron transfer efficiency and stability of the cytochrome b6-f complex. The polypeptide is Cytochrome b6-f complex subunit 6 (Chlorella vulgaris (Green alga)).